A 137-amino-acid chain; its full sequence is Large ribosomal subunit protein uL13 (137 aa).

At Arg55 the chain carries Citrulline. Phosphoserine is present on Ser73. Citrulline is present on Arg136.

This sequence belongs to the universal ribosomal protein uL13 family. In terms of assembly, component of the 60S ribosome. Component of the GAIT complex. Interacts with EIF4G1. Phosphorylation at Ser-73 upon interferon-gamma treatment in macrophages involves a DAPK1-DAPK3 kinase cascade and is causing release from the ribosome, association with the GAIT complex and subsequent involvement in transcript-selective translation inhibition. In terms of processing, citrullinated by PADI4.

The protein resides in the cytoplasm. In terms of biological role, associated with ribosomes but is not required for canonical ribosome function and has extra-ribosomal functions. Component of the GAIT (gamma interferon-activated inhibitor of translation) complex which mediates interferon-gamma-induced transcript-selective translation inhibition in inflammation processes. Upon interferon-gamma activation and subsequent phosphorylation dissociates from the ribosome and assembles into the GAIT complex which binds to stem loop-containing GAIT elements in the 3'-UTR of diverse inflammatory mRNAs (such as ceruplasmin) and suppresses their translation. In the GAIT complex interacts with m7G cap-bound eIF4G at or near the eIF3-binding site and blocks the recruitment of the 43S ribosomal complex. Involved in methylation of rRNA. This Sus scrofa (Pig) protein is Large ribosomal subunit protein uL13 (RPL13A).